Reading from the N-terminus, the 1148-residue chain is Signal transducer and activator of transcription B (1148 aa).

Residues M1–S36 show a composition bias toward low complexity. 5 disordered regions span residues M1–N81, S93–S178, N268–G312, K403–L425, and Y453–T645. Residues F37–S47 show a composition bias toward polar residues. Composition is skewed to low complexity over residues N48–N81, N106–S178, and N268–N298. Positions S466 to Q517 are enriched in low complexity. Polar residues predominate over residues S525 to E541. A compositionally biased stretch (low complexity) spans S544–S557. Residues M561–D572 are compositionally biased toward acidic residues. Over residues G574–G610 the composition is skewed to low complexity. In terms of domain architecture, SH2 spans W997 to K1122.

This sequence belongs to the transcription factor STAT family. As to quaternary structure, homodimer. Does not form heterodimers with other family members.

It is found in the nucleus. Transcription factor that regulates gene expression during development. Required for optimal cell growth. The polypeptide is Signal transducer and activator of transcription B (dstB) (Dictyostelium discoideum (Social amoeba)).